An 864-amino-acid polypeptide reads, in one-letter code: Putative Gly-rich membrane protein Bcell_0380 (864 aa).

A helical transmembrane segment spans residues 7-27 (ITFLAAFICIIFVIYAIYHSV). The segment at 372–399 (TVENSFYDEDTTGQSDTGKGTPMSTADM) is disordered. Positions 383–395 (TGQSDTGKGTPMS) are enriched in polar residues.

The protein localises to the cell membrane. The chain is Putative Gly-rich membrane protein Bcell_0380 from Evansella cellulosilytica (strain ATCC 21833 / DSM 2522 / FERM P-1141 / JCM 9156 / N-4) (Bacillus cellulosilyticus).